The chain runs to 467 residues: Uronate isomerase (467 aa).

Belongs to the metallo-dependent hydrolases superfamily. Uronate isomerase family.

The enzyme catalyses D-glucuronate = D-fructuronate. It catalyses the reaction aldehydo-D-galacturonate = keto-D-tagaturonate. Its pathway is carbohydrate metabolism; pentose and glucuronate interconversion. This chain is Uronate isomerase, found in Haemophilus influenzae (strain 86-028NP).